Here is a 158-residue protein sequence, read N- to C-terminus: MTAPGARLRIIAIGRDSKGPEADLVARYAARLQPRPEVVALPDGTGSPAEIKRREADAILRRLAAEDLVIALDLGGKAPDSAAFAAMLASWRETSRPLAFVIGGAEGLERRIIERADAVLSLGNLTLPHLLARAVLAEQLYRAQCILAGHPYHRAGRP.

S-adenosyl-L-methionine contacts are provided by residues L72, G103, and 122–127 (LGNLTL).

This sequence belongs to the RNA methyltransferase RlmH family. As to quaternary structure, homodimer.

It localises to the cytoplasm. The catalysed reaction is pseudouridine(1915) in 23S rRNA + S-adenosyl-L-methionine = N(3)-methylpseudouridine(1915) in 23S rRNA + S-adenosyl-L-homocysteine + H(+). Functionally, specifically methylates the pseudouridine at position 1915 (m3Psi1915) in 23S rRNA. The chain is Ribosomal RNA large subunit methyltransferase H from Acidiphilium cryptum (strain JF-5).